A 92-amino-acid chain; its full sequence is Ferredoxin-like protein in nif region (92 aa).

2 consecutive 4Fe-4S ferredoxin-type domains span residues 2–28 (ALKIVESCVNCWACVDVCPSEAISLAG) and 29–65 (PHFEISASKCTECDGDYAEKQCASICPVEGAILLADG). 8 residues coordinate [4Fe-4S] cluster: C9, C12, C15, C19, C38, C41, C50, and C54.

Requires [4Fe-4S] cluster as cofactor.

Ferredoxins are iron-sulfur proteins that transfer electrons in a wide variety of metabolic reactions. This Azotobacter vinelandii protein is Ferredoxin-like protein in nif region.